The sequence spans 94 residues: Aspartyl/glutamyl-tRNA(Asn/Gln) amidotransferase subunit C (94 aa).

Belongs to the GatC family. Heterotrimer of A, B and C subunits.

The enzyme catalyses L-glutamyl-tRNA(Gln) + L-glutamine + ATP + H2O = L-glutaminyl-tRNA(Gln) + L-glutamate + ADP + phosphate + H(+). It carries out the reaction L-aspartyl-tRNA(Asn) + L-glutamine + ATP + H2O = L-asparaginyl-tRNA(Asn) + L-glutamate + ADP + phosphate + 2 H(+). Its function is as follows. Allows the formation of correctly charged Asn-tRNA(Asn) or Gln-tRNA(Gln) through the transamidation of misacylated Asp-tRNA(Asn) or Glu-tRNA(Gln) in organisms which lack either or both of asparaginyl-tRNA or glutaminyl-tRNA synthetases. The reaction takes place in the presence of glutamine and ATP through an activated phospho-Asp-tRNA(Asn) or phospho-Glu-tRNA(Gln). The chain is Aspartyl/glutamyl-tRNA(Asn/Gln) amidotransferase subunit C from Campylobacter jejuni subsp. jejuni serotype O:6 (strain 81116 / NCTC 11828).